Consider the following 409-residue polypeptide: tRNA-specific 2-thiouridylase MnmA (409 aa).

ATP-binding positions include 40–47 (GLSGGVDS) and leucine 66. The active-site Nucleophile is cysteine 127. The cysteines at positions 127 and 237 are disulfide-linked. Residue glycine 152 coordinates ATP. Residues 156–179 (RIRHREDPEPQQALPGDSSGRHQL) form a disordered region. Residues 187–189 (KDQ) form an interaction with tRNA region. Catalysis depends on cysteine 237, which acts as the Cysteine persulfide intermediate. The segment at 342-343 (RY) is interaction with tRNA.

It belongs to the MnmA/TRMU family.

It localises to the cytoplasm. The enzyme catalyses S-sulfanyl-L-cysteinyl-[protein] + uridine(34) in tRNA + AH2 + ATP = 2-thiouridine(34) in tRNA + L-cysteinyl-[protein] + A + AMP + diphosphate + H(+). Catalyzes the 2-thiolation of uridine at the wobble position (U34) of tRNA, leading to the formation of s(2)U34. This chain is tRNA-specific 2-thiouridylase MnmA, found in Prochlorococcus marinus (strain MIT 9303).